Consider the following 271-residue polypeptide: Putative pyruvate, phosphate dikinase regulatory protein (271 aa).

147–154 (GLSRTSKT) is a binding site for ADP.

Belongs to the pyruvate, phosphate/water dikinase regulatory protein family. PDRP subfamily.

It carries out the reaction N(tele)-phospho-L-histidyl/L-threonyl-[pyruvate, phosphate dikinase] + ADP = N(tele)-phospho-L-histidyl/O-phospho-L-threonyl-[pyruvate, phosphate dikinase] + AMP + H(+). The catalysed reaction is N(tele)-phospho-L-histidyl/O-phospho-L-threonyl-[pyruvate, phosphate dikinase] + phosphate + H(+) = N(tele)-phospho-L-histidyl/L-threonyl-[pyruvate, phosphate dikinase] + diphosphate. In terms of biological role, bifunctional serine/threonine kinase and phosphorylase involved in the regulation of the pyruvate, phosphate dikinase (PPDK) by catalyzing its phosphorylation/dephosphorylation. The chain is Putative pyruvate, phosphate dikinase regulatory protein from Clostridium tetani (strain Massachusetts / E88).